A 487-amino-acid polypeptide reads, in one-letter code: Alpha-1,4-L-rhamnosidase (487 aa).

The signal sequence occupies residues 1–30 (MKNKKRLCHILKYIITCFLFGVIFIIPIQA). The active-site Proton donor is glutamate 199.

The protein belongs to the glycosyl hydrolase 39 family.

Its subcellular location is the periplasm. Its function is as follows. Alpha-rhamnosidase involved in ulvan degradation. Ulvan is the main polysaccharide component of the Ulvales (green seaweed) cell wall. It is composed of disaccharide building blocks comprising 3-sulfated rhamnose (Rha3S) linked to D-glucuronic acid (GlcA), L-iduronic acid (IduA), or D-xylose (Xyl). Endo-acting alpha-1,4-L-rhamnosidase cleaves rhamnose sections interspersed between xylose residues within the polymer, degrading larger oligomers with consecutive Xyl-Rha3S units that are resistant to the ulvan lyases and producing dimers Xyl-Rha3S and Xyl2S-Rha3S as the smallest products. The polypeptide is Alpha-1,4-L-rhamnosidase (Formosa agariphila (strain DSM 15362 / KCTC 12365 / LMG 23005 / KMM 3901 / M-2Alg 35-1)).